The primary structure comprises 574 residues: Transmembrane protein 108 (574 aa).

Residues 9–29 (YCQLLSFLLTLALTKALVLAV) traverse the membrane as a helical segment. The segment at 31–169 (EPSPRESLQT…ATTRRPPRPP (139 aa)) is interaction with SH3GL2. Disordered regions lie at residues 32 to 352 (PSPR…SGVF) and 364 to 417 (DATV…PRPL). Residues 58–86 (TRLSSVLTLNPTPDGPSSQAAATLETTVS) are compositionally biased toward polar residues. The segment covering 132–160 (LPPGDATPTTTLPTKPAGTTSRPTVAPRA) has biased composition (low complexity). The interval 173–406 (RKGAGGSTRT…SPAEEEAEAS (234 aa)) is interaction with DST (isoform 1). Polar residues predominate over residues 245–271 (FSSTQPQTVSPATAPRSTSRVPPTTSL). Positions 292–312 (TSPGGEPAATAATGAPASTQP) are enriched in low complexity. Residues 316 to 332 (PSQSPHGDVQDSASHSD) are compositionally biased toward polar residues. A helical membrane pass occupies residues 468 to 488 (IAWVIVAISVPISSCSVLLTV). Positions 489-574 (CCMRRKKKTA…FVGNDQVSEI (86 aa)) are interaction with CYFIP2.

In terms of assembly, interacts with DST (isoform 1). Interacts with SH3GL2. Interacts (via N-terminus) with CYFIP1 and CYFIP2; the interactions associate TMEM108 with the WAVE1 complex. In terms of processing, glycosylated. In terms of tissue distribution, expressed in the nervous system tissues, such as hippocampus and spinal cord, is barely detectable in peripheral tissues such as heart, lung, liver, kidney and muscle. In brain, highly expressed in dentate gyrus neurons and expressed in cortex, olfactory bulb, ammon's horn, cerebellum, hypothalamus and striatum.

The protein localises to the membrane. It localises to the postsynaptic density. It is found in the endosome membrane. Its subcellular location is the cell projection. The protein resides in the axon. The protein localises to the dendrite. It localises to the early endosome. Its function is as follows. Transmembrane protein required for proper cognitive functions. Involved in the development of dentate gyrus (DG) neuron circuitry, is necessary for AMPA receptors surface expression and proper excitatory postsynaptic currents of DG granule neurons. Regulates the organization and stability of the microtubule network of sensory neurons to allow axonal transport. Through the interaction with DST, mediates the docking of the dynein/dynactin motor complex to vesicle cargos for retrograde axonal transport. In hippocampal neurons, required for BDNF-dependent dendrite outgrowth. Cooperates with SH3GL2 and recruits the WAVE1 complex to facilitate actin-dependent BDNF:NTRK2 early endocytic trafficking and mediate signaling from early endosomes. The polypeptide is Transmembrane protein 108 (Mus musculus (Mouse)).